A 514-amino-acid chain; its full sequence is Pantetheinase (514 aa).

The first 22 residues, 1 to 22 (MITSRLLVYVAVLVLCVIKVSS), serve as a signal peptide directing secretion. The N-linked (GlcNAc...) asparagine glycan is linked to asparagine 39. The region spanning 40–307 (ATLVPVSHEE…GKLLLSQLDS (268 aa)) is the CN hydrolase domain. The active-site Proton acceptor is glutamate 80. 2 N-linked (GlcNAc...) asparagine glycosylation sites follow: asparagine 87 and asparagine 147. The Proton donor role is filled by lysine 179. The active-site Nucleophile is the cysteine 212. Residues asparagine 316 and asparagine 354 are each glycosylated (N-linked (GlcNAc...) asparagine). Aspartate 492 carries GPI-anchor amidated aspartate lipidation. A propeptide spans 493–514 (PRSQVPGVMLLVIIPIVCSLSW) (removed in mature form).

Belongs to the carbon-nitrogen hydrolase superfamily. BTD/VNN family. As to quaternary structure, monomer.

The protein localises to the cell membrane. The enzyme catalyses (R)-pantetheine + H2O = cysteamine + (R)-pantothenate. In terms of biological role, amidohydrolase that hydrolyzes specifically one of the carboamide linkages in D-pantetheine thus recycling pantothenic acid (vitamin B5) and releasing cysteamine. The chain is Pantetheinase (VNN1) from Canis lupus familiaris (Dog).